The sequence spans 354 residues: Zinc finger protein 346 (354 aa).

4 Matrin-type zinc fingers span residues threonine 34–arginine 64, lysine 95–leucine 125, lysine 165–lysine 195, and phenylalanine 232–serine 262. Zn(2+) contacts are provided by cysteine 36, cysteine 39, histidine 52, histidine 58, cysteine 97, cysteine 100, histidine 113, and histidine 119. The interval methionine 263 to glycine 343 is disordered. Composition is skewed to low complexity over residues glycine 270–alanine 289 and glycine 310–leucine 323. Residues methionine 324 to serine 333 show a composition bias toward pro residues.

It is found in the nucleus. The protein resides in the cytoplasm. Its function is as follows. Binds preferentially to dsRNA, but also to RNA-DNA hybrids. The polypeptide is Zinc finger protein 346 (Xenopus tropicalis (Western clawed frog)).